The primary structure comprises 134 residues: MVVAPYLAVAIGGSLGAMSRYLVTIMAQNAWGIKFPYGTLLVNTLGSFLAGFFLIVLVGRFSAEESFRLFLFTGFLGAFTTFSSFAAESLFMFEQGYWFKLMTNILVNNVGSLSMVFIGTLVAKYVLLGHQGSN.

Helical transmembrane passes span L7–A27, G38–V58, L69–S89, and V110–H130. Na(+) is bound by residues G77 and T80.

Belongs to the fluoride channel Fluc/FEX (TC 1.A.43) family.

The protein resides in the cell inner membrane. The catalysed reaction is fluoride(in) = fluoride(out). With respect to regulation, na(+) is not transported, but it plays an essential structural role and its presence is essential for fluoride channel function. Fluoride-specific ion channel. Important for reducing fluoride concentration in the cell, thus reducing its toxicity. The chain is Fluoride-specific ion channel FluC from Legionella pneumophila subsp. pneumophila (strain Philadelphia 1 / ATCC 33152 / DSM 7513).